Here is a 142-residue protein sequence, read N- to C-terminus: Prefoldin subunit alpha 2 (142 aa).

It belongs to the prefoldin subunit alpha family. Heterohexamer of two alpha and four beta subunits.

The protein resides in the cytoplasm. In terms of biological role, molecular chaperone capable of stabilizing a range of proteins. Seems to fulfill an ATP-independent, HSP70-like function in archaeal de novo protein folding. The sequence is that of Prefoldin subunit alpha 2 from Thermococcus kodakarensis (strain ATCC BAA-918 / JCM 12380 / KOD1) (Pyrococcus kodakaraensis (strain KOD1)).